A 334-amino-acid polypeptide reads, in one-letter code: Thioredoxin reductase (334 aa).

Residues Ser-10–Ala-13, Ile-39–Ala-40, Gln-44, Asn-53, Val-86, Cys-143, Asp-287, and Arg-294–Ala-296 contribute to the FAD site. The cysteines at positions 140 and 143 are disulfide-linked.

It belongs to the class-II pyridine nucleotide-disulfide oxidoreductase family. As to quaternary structure, homodimer. It depends on FAD as a cofactor.

Its subcellular location is the cytoplasm. The enzyme catalyses [thioredoxin]-dithiol + NADP(+) = [thioredoxin]-disulfide + NADPH + H(+). This Neurospora crassa (strain ATCC 24698 / 74-OR23-1A / CBS 708.71 / DSM 1257 / FGSC 987) protein is Thioredoxin reductase (cys-9).